The chain runs to 104 residues: L-rhamnose mutarotase (104 aa).

Y18 serves as a coordination point for substrate. Catalysis depends on H22, which acts as the Proton donor. Substrate is bound by residues Y41 and 76 to 77 (WW).

It belongs to the rhamnose mutarotase family. As to quaternary structure, homodimer.

It localises to the cytoplasm. The enzyme catalyses alpha-L-rhamnose = beta-L-rhamnose. It functions in the pathway carbohydrate metabolism; L-rhamnose metabolism. Functionally, involved in the anomeric conversion of L-rhamnose. This chain is L-rhamnose mutarotase, found in Escherichia fergusonii (strain ATCC 35469 / DSM 13698 / CCUG 18766 / IAM 14443 / JCM 21226 / LMG 7866 / NBRC 102419 / NCTC 12128 / CDC 0568-73).